A 239-amino-acid polypeptide reads, in one-letter code: Pyridoxine 5'-phosphate synthase (239 aa).

Asn7 contacts 3-amino-2-oxopropyl phosphate. A 1-deoxy-D-xylulose 5-phosphate-binding site is contributed by 9 to 10 (DH). Arg18 serves as a coordination point for 3-amino-2-oxopropyl phosphate. The Proton acceptor role is filled by His43. 1-deoxy-D-xylulose 5-phosphate is bound by residues Arg45 and His50. Glu70 serves as the catalytic Proton acceptor. Thr100 provides a ligand contact to 1-deoxy-D-xylulose 5-phosphate. The active-site Proton donor is His191. 3-amino-2-oxopropyl phosphate is bound by residues Gly192 and 213–214 (GH).

Belongs to the PNP synthase family. As to quaternary structure, homooctamer; tetramer of dimers.

It is found in the cytoplasm. It carries out the reaction 3-amino-2-oxopropyl phosphate + 1-deoxy-D-xylulose 5-phosphate = pyridoxine 5'-phosphate + phosphate + 2 H2O + H(+). It functions in the pathway cofactor biosynthesis; pyridoxine 5'-phosphate biosynthesis; pyridoxine 5'-phosphate from D-erythrose 4-phosphate: step 5/5. In terms of biological role, catalyzes the complicated ring closure reaction between the two acyclic compounds 1-deoxy-D-xylulose-5-phosphate (DXP) and 3-amino-2-oxopropyl phosphate (1-amino-acetone-3-phosphate or AAP) to form pyridoxine 5'-phosphate (PNP) and inorganic phosphate. The polypeptide is Pyridoxine 5'-phosphate synthase (Geobacter sp. (strain M21)).